The following is a 497-amino-acid chain: Cytochrome P450 2D6 (497 aa).

Residue Asp301 coordinates substrate. Heme is bound at residue Cys443.

It belongs to the cytochrome P450 family. Requires heme as cofactor.

Its subcellular location is the endoplasmic reticulum membrane. It localises to the microsome membrane. The catalysed reaction is (5Z,8Z,11Z,14Z)-eicosatetraenoate + reduced [NADPH--hemoprotein reductase] + O2 = (8R,9S)-epoxy-(5Z,11Z,14Z)-eicosatrienoate + oxidized [NADPH--hemoprotein reductase] + H2O + H(+). It carries out the reaction (5Z,8Z,11Z,14Z)-eicosatetraenoate + reduced [NADPH--hemoprotein reductase] + O2 = (11R,12S)-epoxy-(5Z,8Z,14Z)-eicosatrienoate + oxidized [NADPH--hemoprotein reductase] + H2O + H(+). The enzyme catalyses (5Z,8Z,11Z,14Z)-eicosatetraenoate + reduced [NADPH--hemoprotein reductase] + O2 = (14S,15R)-epoxy-(5Z,8Z,11Z)-eicosatrienoate + oxidized [NADPH--hemoprotein reductase] + H2O + H(+). It catalyses the reaction N-(5Z,8Z,11Z,14Z-eicosatetraenoyl)-ethanolamine + reduced [NADPH--hemoprotein reductase] + O2 = N-(8,9-epoxy-5Z,11Z,14Z-eicosatrienoyl)-ethanolamine + oxidized [NADPH--hemoprotein reductase] + H2O + H(+). The catalysed reaction is N-(5Z,8Z,11Z,14Z-eicosatetraenoyl)-ethanolamine + reduced [NADPH--hemoprotein reductase] + O2 = N-(11,12-epoxy-5Z,8Z,14Z-eicosatrienoyl)-ethanolamine + oxidized [NADPH--hemoprotein reductase] + H2O + H(+). It carries out the reaction N-(5Z,8Z,11Z,14Z-eicosatetraenoyl)-ethanolamine + reduced [NADPH--hemoprotein reductase] + O2 = N-(14,15-epoxy-5Z,8Z,11Z-eicosatrienoyl)-ethanolamine + oxidized [NADPH--hemoprotein reductase] + H2O + H(+). The enzyme catalyses N-(5Z,8Z,11Z,14Z-eicosatetraenoyl)-ethanolamine + reduced [NADPH--hemoprotein reductase] + O2 = N-(20-hydroxy-5Z,8Z,11Z,14Z-eicosatetraenoyl)-ethanolamine + oxidized [NADPH--hemoprotein reductase] + H2O + H(+). It catalyses the reaction (5Z,8Z,11Z,14Z,17Z)-eicosapentaenoate + reduced [NADPH--hemoprotein reductase] + O2 = (17S,18R)-epoxy-(5Z,8Z,11Z,14Z)-eicosatetraenoate + oxidized [NADPH--hemoprotein reductase] + H2O + H(+). The catalysed reaction is (4Z,7Z,10Z,13Z,16Z,19Z)-docosahexaenoate + reduced [NADPH--hemoprotein reductase] + O2 = (19R,20S)-epoxy-(4Z,7Z,10Z,13Z,16Z)-docosapentaenoate + oxidized [NADPH--hemoprotein reductase] + H2O + H(+). It carries out the reaction (4Z,7Z,10Z,13Z,16Z,19Z)-docosahexaenoate + reduced [NADPH--hemoprotein reductase] + O2 = (19S,20R)-epoxy-(4Z,7Z,10Z,13Z,16Z)-docosapentaenoate + oxidized [NADPH--hemoprotein reductase] + H2O + H(+). The enzyme catalyses cholesterol + reduced [NADPH--hemoprotein reductase] + O2 = 25-hydroxycholesterol + oxidized [NADPH--hemoprotein reductase] + H2O + H(+). It catalyses the reaction all-trans-retinol + reduced [NADPH--hemoprotein reductase] + O2 = all-trans-retinal + oxidized [NADPH--hemoprotein reductase] + 2 H2O + H(+). It participates in cofactor metabolism; retinol metabolism. The protein operates within lipid metabolism; fatty acid metabolism. It functions in the pathway steroid metabolism; cholesterol metabolism. A cytochrome P450 monooxygenase involved in the metabolism of fatty acids, steroids and retinoids. Mechanistically, uses molecular oxygen inserting one oxygen atom into a substrate, and reducing the second into a water molecule, with two electrons provided by NADPH via cytochrome P450 reductase (NADPH--hemoprotein reductase). Catalyzes the epoxidation of double bonds of polyunsaturated fatty acids (PUFA). Metabolizes endocannabinoid arachidonoylethanolamide (anandamide) to 20-hydroxyeicosatetraenoic acid ethanolamide (20-HETE-EA) and 8,9-, 11,12-, and 14,15-epoxyeicosatrienoic acid ethanolamides (EpETrE-EAs), potentially modulating endocannabinoid system signaling. Catalyzes the hydroxylation of carbon-hydrogen bonds. Metabolizes cholesterol toward 25-hydroxycholesterol, a physiological regulator of cellular cholesterol homeostasis. Catalyzes the oxidative transformations of all-trans retinol to all-trans retinal, a precursor for the active form all-trans-retinoic acid. Also involved in the oxidative metabolism of drugs such as antiarrhythmics, adrenoceptor antagonists, and tricyclic antidepressants. The sequence is that of Cytochrome P450 2D6 (CYP2D6) from Pan troglodytes (Chimpanzee).